We begin with the raw amino-acid sequence, 461 residues long: Arginine biosynthesis bifunctional protein ArgJ, chloroplastic (461 aa).

The substrate site is built by Thr202, Lys228, Thr239, Glu326, Asn456, and Thr461. Thr239 (nucleophile) is an active-site residue.

The protein belongs to the ArgJ family. Heterodimer of an alpha and a beta chain.

The protein resides in the plastid. It localises to the chloroplast. The enzyme catalyses N(2)-acetyl-L-ornithine + L-glutamate = N-acetyl-L-glutamate + L-ornithine. It carries out the reaction L-glutamate + acetyl-CoA = N-acetyl-L-glutamate + CoA + H(+). It participates in amino-acid biosynthesis; L-arginine biosynthesis; L-ornithine and N-acetyl-L-glutamate from L-glutamate and N(2)-acetyl-L-ornithine (cyclic): step 1/1. Its pathway is amino-acid biosynthesis; L-arginine biosynthesis; N(2)-acetyl-L-ornithine from L-glutamate: step 1/4. Its function is as follows. Catalyzes two activities which are involved in the cyclic version of arginine biosynthesis: the synthesis of acetylglutamate from glutamate and acetyl-CoA, and of ornithine by transacetylation between acetylornithine and glutamate. The polypeptide is Arginine biosynthesis bifunctional protein ArgJ, chloroplastic (Ostreococcus lucimarinus (strain CCE9901)).